The sequence spans 186 residues: NADH dehydrogenase [ubiquinone] 1 beta subcomplex subunit 8, mitochondrial (186 aa).

Residues 1–28 (MAVARAGVLGVQWLQRASRNVMPLGART) constitute a mitochondrion transit peptide. A helical membrane pass occupies residues 133–153 (LFGFLAFMIFMCWVGDVYPVY).

Belongs to the complex I NDUFB8 subunit family. In terms of assembly, complex I is composed of 45 different subunits.

It localises to the mitochondrion inner membrane. Functionally, accessory subunit of the mitochondrial membrane respiratory chain NADH dehydrogenase (Complex I), that is believed not to be involved in catalysis. Complex I functions in the transfer of electrons from NADH to the respiratory chain. The immediate electron acceptor for the enzyme is believed to be ubiquinone. The polypeptide is NADH dehydrogenase [ubiquinone] 1 beta subcomplex subunit 8, mitochondrial (NDUFB8) (Homo sapiens (Human)).